The chain runs to 249 residues: Spindlin-4 (249 aa).

3 tudor-like domain regions span residues 41–90 (VGCR…LELH), 119–168 (VGKA…YTLL), and 201–246 (VGKQ…YGLV). Histone H3K4me3 and H3R8me2a binding regions lie at residues 80 to 85 (GKDSVY), Glu128, and 237 to 239 (DIH).

The protein belongs to the SPIN/STSY family. Interacts with C11orf84/SPINDOC. Associates with chromatin.

The protein resides in the cytoplasm. The protein localises to the nucleus. Binds to acetylated and methylated histones, including H3K4me3 and H4K20me3, probably acting as a histone reader that recognizes chromatin marks to mediate downstream cellular effects. Promotes canonical WNT signaling, and is involved in the down-regulation of cell proliferation. This is Spindlin-4 (Spin4) from Mus musculus (Mouse).